We begin with the raw amino-acid sequence, 287 residues long: Ribosomal RNA small subunit methyltransferase I (287 aa).

This sequence belongs to the methyltransferase superfamily. RsmI family.

It is found in the cytoplasm. It catalyses the reaction cytidine(1402) in 16S rRNA + S-adenosyl-L-methionine = 2'-O-methylcytidine(1402) in 16S rRNA + S-adenosyl-L-homocysteine + H(+). In terms of biological role, catalyzes the 2'-O-methylation of the ribose of cytidine 1402 (C1402) in 16S rRNA. The chain is Ribosomal RNA small subunit methyltransferase I from Helicobacter pylori (strain ATCC 700392 / 26695) (Campylobacter pylori).